The sequence spans 680 residues: Dihydroxyacetone phosphate acyltransferase (680 aa).

Ser-12 and Ser-17 each carry phosphoserine. An HXXXXD motif motif is present at residues 162–167 (HRSYID). An N6-acetyllysine modification is found at Lys-643. The Microbody targeting signal signature appears at 678 to 680 (AKL).

This sequence belongs to the GPAT/DAPAT family. In terms of assembly, part of a heterotrimeric complex composed of GNPAT, AGPS and a modified form of GNPAT.

The protein localises to the peroxisome membrane. The enzyme catalyses dihydroxyacetone phosphate + an acyl-CoA = a 1-acylglycerone 3-phosphate + CoA. The catalysed reaction is dihydroxyacetone phosphate + hexadecanoyl-CoA = 1-hexadecanoylglycerone 3-phosphate + CoA. It functions in the pathway membrane lipid metabolism; glycerophospholipid metabolism. Dihydroxyacetonephosphate acyltransferase catalyzing the first step in the biosynthesis of plasmalogens, a subset of phospholipids that differ from other glycerolipids by having an alkyl chain attached through a vinyl ether linkage at the sn-1 position of the glycerol backbone, and which unique physical properties have an impact on various aspects of cell signaling and membrane biology. This chain is Dihydroxyacetone phosphate acyltransferase, found in Homo sapiens (Human).